The following is an 883-amino-acid chain: Alanine--tRNA ligase (883 aa).

His563, His567, Cys673, and His677 together coordinate Zn(2+).

This sequence belongs to the class-II aminoacyl-tRNA synthetase family. The cofactor is Zn(2+).

The protein localises to the cytoplasm. The enzyme catalyses tRNA(Ala) + L-alanine + ATP = L-alanyl-tRNA(Ala) + AMP + diphosphate. Its function is as follows. Catalyzes the attachment of alanine to tRNA(Ala) in a two-step reaction: alanine is first activated by ATP to form Ala-AMP and then transferred to the acceptor end of tRNA(Ala). Also edits incorrectly charged Ser-tRNA(Ala) and Gly-tRNA(Ala) via its editing domain. This is Alanine--tRNA ligase from Caulobacter sp. (strain K31).